Consider the following 478-residue polypeptide: Cytochrome c-552 (478 aa).

The first 26 residues, 1–26, serve as a signal peptide directing secretion; that stretch reads MARKTLRARRFFSLIFPFFFMTSVYA. Histidine 94 lines the heme c pocket. 3 residues coordinate heme: cysteine 122, cysteine 125, and lysine 126. 6 residues coordinate heme c: cysteine 160, cysteine 163, histidine 164, cysteine 209, cysteine 212, and histidine 213. Positions 215, 216, 261, and 263 each coordinate Ca(2+). Tyrosine 216 lines the substrate pocket. Histidine 264 is a substrate binding site. The heme c site is built by histidine 275, cysteine 282, cysteine 285, histidine 286, histidine 301, cysteine 314, cysteine 317, histidine 318, and histidine 393.

The protein belongs to the cytochrome c-552 family. Ca(2+) is required as a cofactor. Heme c serves as cofactor.

It localises to the periplasm. The catalysed reaction is 6 Fe(III)-[cytochrome c] + NH4(+) + 2 H2O = 6 Fe(II)-[cytochrome c] + nitrite + 8 H(+). The protein operates within nitrogen metabolism; nitrate reduction (assimilation). In terms of biological role, catalyzes the reduction of nitrite to ammonia, consuming six electrons in the process. The polypeptide is Cytochrome c-552 (Salmonella arizonae (strain ATCC BAA-731 / CDC346-86 / RSK2980)).